The following is a 453-amino-acid chain: UDP-N-acetylmuramoylalanine--D-glutamate ligase (453 aa).

Gly-120–Thr-126 lines the ATP pocket.

This sequence belongs to the MurCDEF family.

The protein resides in the cytoplasm. The catalysed reaction is UDP-N-acetyl-alpha-D-muramoyl-L-alanine + D-glutamate + ATP = UDP-N-acetyl-alpha-D-muramoyl-L-alanyl-D-glutamate + ADP + phosphate + H(+). It participates in cell wall biogenesis; peptidoglycan biosynthesis. Functionally, cell wall formation. Catalyzes the addition of glutamate to the nucleotide precursor UDP-N-acetylmuramoyl-L-alanine (UMA). This is UDP-N-acetylmuramoylalanine--D-glutamate ligase from Teredinibacter turnerae (strain ATCC 39867 / T7901).